A 537-amino-acid polypeptide reads, in one-letter code: CTP synthase (537 aa).

The interval 1-269 (MNQTKYIFVT…DKVALKKLDL (269 aa)) is amidoligase domain. Serine 15 lines the CTP pocket. Serine 15 lines the UTP pocket. 16 to 21 (SLGKGI) is a binding site for ATP. Tyrosine 56 is an L-glutamine binding site. Aspartate 73 is a binding site for ATP. 2 residues coordinate Mg(2+): aspartate 73 and glutamate 143. Residues 150-152 (DIE), 190-195 (KTKPTQ), and lysine 226 each bind CTP. Residues 190 to 195 (KTKPTQ) and lysine 226 each bind UTP. The Glutamine amidotransferase type-1 domain occupies 295–537 (SIGLVGKYVE…IAAAVKHKNK (243 aa)). Glycine 357 lines the L-glutamine pocket. Residue cysteine 384 is the Nucleophile; for glutamine hydrolysis of the active site. L-glutamine-binding positions include 385-388 (LGMQ), glutamate 408, and arginine 465. Residues histidine 510 and glutamate 512 contribute to the active site.

This sequence belongs to the CTP synthase family. As to quaternary structure, homotetramer.

The catalysed reaction is UTP + L-glutamine + ATP + H2O = CTP + L-glutamate + ADP + phosphate + 2 H(+). It carries out the reaction L-glutamine + H2O = L-glutamate + NH4(+). It catalyses the reaction UTP + NH4(+) + ATP = CTP + ADP + phosphate + 2 H(+). It participates in pyrimidine metabolism; CTP biosynthesis via de novo pathway; CTP from UDP: step 2/2. Its activity is regulated as follows. Allosterically activated by GTP, when glutamine is the substrate; GTP has no effect on the reaction when ammonia is the substrate. The allosteric effector GTP functions by stabilizing the protein conformation that binds the tetrahedral intermediate(s) formed during glutamine hydrolysis. Inhibited by the product CTP, via allosteric rather than competitive inhibition. Catalyzes the ATP-dependent amination of UTP to CTP with either L-glutamine or ammonia as the source of nitrogen. Regulates intracellular CTP levels through interactions with the four ribonucleotide triphosphates. The polypeptide is CTP synthase (Flavobacterium psychrophilum (strain ATCC 49511 / DSM 21280 / CIP 103535 / JIP02/86)).